Here is a 482-residue protein sequence, read N- to C-terminus: Glycogen synthase 2 (482 aa).

K18 is a binding site for ADP-alpha-D-glucose.

This sequence belongs to the glycosyltransferase 1 family. Bacterial/plant glycogen synthase subfamily.

The enzyme catalyses [(1-&gt;4)-alpha-D-glucosyl](n) + ADP-alpha-D-glucose = [(1-&gt;4)-alpha-D-glucosyl](n+1) + ADP + H(+). The protein operates within glycan biosynthesis; glycogen biosynthesis. Its function is as follows. Synthesizes alpha-1,4-glucan chains using ADP-glucose. This chain is Glycogen synthase 2, found in Bradyrhizobium diazoefficiens (strain JCM 10833 / BCRC 13528 / IAM 13628 / NBRC 14792 / USDA 110).